Reading from the N-terminus, the 318-residue chain is Mediator of RNA polymerase II transcription subunit 3 (318 aa).

Over residues 134–156 (SAAGITKTSSGNDGNTTGSTANT) the composition is skewed to polar residues. The disordered stretch occupies residues 134-225 (SAAGITKTSS…PSLKQIPNTQ (92 aa)). Over residues 192 to 217 (HTGPATAPTTSNSAASAAAAAANTPS) the composition is skewed to low complexity.

It belongs to the Mediator complex subunit 3 family. As to quaternary structure, component of the Mediator complex.

The protein resides in the nucleus. In terms of biological role, component of the Mediator complex, a coactivator involved in regulated gene transcription of nearly all RNA polymerase II-dependent genes. Mediator functions as a bridge to convey information from gene-specific regulatory proteins to the basal RNA polymerase II transcription machinery. Mediator is recruited to promoters by direct interactions with regulatory proteins and serves as a scaffold for the assembly of a functional preinitiation complex with RNA polymerase II and the general transcription factors. The polypeptide is Mediator of RNA polymerase II transcription subunit 3 (PGD1) (Kluyveromyces lactis (strain ATCC 8585 / CBS 2359 / DSM 70799 / NBRC 1267 / NRRL Y-1140 / WM37) (Yeast)).